A 273-amino-acid polypeptide reads, in one-letter code: DnaJ homolog subfamily C member 27 (273 aa).

GTP is bound by residues 23 to 30 (GNAEVGKS), 71 to 75 (DMAGH), and 134 to 137 (NKVD). Positions 217 to 273 (DSWDMLGVKPGATREEVNKAYRKLAVLLHPDKCVAPGSEDAFKAVVNARTSLLKNIK) constitute a J domain.

It belongs to the small GTPase superfamily. Rab family.

The protein localises to the nucleus. Functionally, GTPase possibly involved in regulation of the MEK/ERK pathway. This chain is DnaJ homolog subfamily C member 27 (dnajc27), found in Danio rerio (Zebrafish).